The chain runs to 425 residues: Divalent metal cation transporter MntH (425 aa).

11 consecutive transmembrane segments (helical) span residues 30 to 50 (LLPF…PGNF), 61 to 81 (GYML…IQSL), 107 to 127 (IGLW…EFIG), 134 to 154 (LLFG…SFAI), 167 to 187 (AGIA…TFFA), 209 to 231 (VLLA…HSAL), 255 to 275 (ILIA…VAAA), 294 to 314 (FGHL…LVAG), 344 to 364 (FITI…TTAL), 365 to 385 (VLSQ…LIMF), and 401 to 421 (ITVV…FLIV).

The protein belongs to the NRAMP family.

It is found in the cell membrane. Its function is as follows. H(+)-stimulated, divalent metal cation uptake system. Involved in manganese uptake. Can probably also transport cadmium, cobalt, copper and zinc, but not iron. May be the predominant transporter of manganese during logarithmic phase growth. The chain is Divalent metal cation transporter MntH from Bacillus subtilis (strain 168).